We begin with the raw amino-acid sequence, 98 residues long: ATP-dependent Clp protease adapter protein ClpS (98 aa).

Belongs to the ClpS family. As to quaternary structure, binds to the N-terminal domain of the chaperone ClpA.

Functionally, involved in the modulation of the specificity of the ClpAP-mediated ATP-dependent protein degradation. This chain is ATP-dependent Clp protease adapter protein ClpS, found in Synechocystis sp. (strain ATCC 27184 / PCC 6803 / Kazusa).